The chain runs to 121 residues: Nitrogenase-stabilizing/protective protein NifW (121 aa).

The protein belongs to the NifW family. Homotrimer; associates with NifD.

Its function is as follows. May protect the nitrogenase Fe-Mo protein from oxidative damage. In Synechococcus sp. (strain JA-2-3B'a(2-13)) (Cyanobacteria bacterium Yellowstone B-Prime), this protein is Nitrogenase-stabilizing/protective protein NifW.